The following is a 251-amino-acid chain: tRNA (guanine-N(1)-)-methyltransferase (251 aa).

S-adenosyl-L-methionine is bound by residues Gly113 and 133-138; that span reads IGDYVL.

This sequence belongs to the RNA methyltransferase TrmD family. In terms of assembly, homodimer.

The protein localises to the cytoplasm. The enzyme catalyses guanosine(37) in tRNA + S-adenosyl-L-methionine = N(1)-methylguanosine(37) in tRNA + S-adenosyl-L-homocysteine + H(+). In terms of biological role, specifically methylates guanosine-37 in various tRNAs. The protein is tRNA (guanine-N(1)-)-methyltransferase of Pectobacterium carotovorum subsp. carotovorum (strain PC1).